A 441-amino-acid chain; its full sequence is Methionine aminopeptidase 2A (441 aa).

The interval 1-103 is disordered; sequence MAIGNPEVAT…SGDFPQGEIQ (103 aa). A compositionally biased stretch (polar residues) spans 18 to 33; it reads AESSNGNESQLSSDLT. Residues 37 to 62 show a composition bias toward basic and acidic residues; it reads DLAEVKEDEKDNNQEEEDGLKAEAST. The span at 63–76 shows a compositional bias: basic residues; sequence KKKKKKSKSKKKKS. Residue histidine 194 participates in substrate binding. Residues aspartate 214, aspartate 225, and histidine 294 each contribute to the a divalent metal cation site. Histidine 302 is a binding site for substrate. A divalent metal cation contacts are provided by glutamate 327 and glutamate 422.

The protein belongs to the peptidase M24A family. Methionine aminopeptidase eukaryotic type 2 subfamily. Co(2+) serves as cofactor. It depends on Zn(2+) as a cofactor. Requires Mn(2+) as cofactor. Fe(2+) is required as a cofactor. Ubiquitous. Preferentially expressed in roots.

The protein localises to the cytoplasm. It catalyses the reaction Release of N-terminal amino acids, preferentially methionine, from peptides and arylamides.. Its function is as follows. Cotranslationally removes the N-terminal methionine from nascent proteins. The N-terminal methionine is often cleaved when the second residue in the primary sequence is small and uncharged (Met-Ala-, Cys, Gly, Pro, Ser, Thr, or Val). The chain is Methionine aminopeptidase 2A from Arabidopsis thaliana (Mouse-ear cress).